Consider the following 184-residue polypeptide: Photosystem I assembly protein Ycf4 (184 aa).

2 helical membrane passes run 22–42 and 57–77; these read FCWA…GTSS and IIFF…LFIS.

It belongs to the Ycf4 family.

It localises to the plastid. It is found in the chloroplast thylakoid membrane. Its function is as follows. Seems to be required for the assembly of the photosystem I complex. The chain is Photosystem I assembly protein Ycf4 from Lobularia maritima (Sweet alyssum).